Reading from the N-terminus, the 86-residue chain is Cytochrome c oxidase subunit 12, mitochondrial (86 aa).

The CHCH domain occupies 30 to 73; that stretch reads TKHCFQSYIDYFRCIKAKGEDFVPCKQFWHAYQSLCPMEWVERW. Positions 33-43 match the Cx9C motif motif; that stretch reads CFQSYIDYFRC. 2 disulfide bridges follow: Cys-33–Cys-65 and Cys-43–Cys-54. The Cx10C motif signature appears at 54 to 65; that stretch reads CKQFWHAYQSLC.

Belongs to the cytochrome c oxidase subunit 6B family. As to quaternary structure, component of the cytochrome c oxidase (complex IV, CIV), a multisubunit enzyme composed of a catalytic core of 3 subunits and several supernumerary subunits. The complex exists as a monomer or a dimer and forms supercomplexes (SCs) in the inner mitochondrial membrane with ubiquinol-cytochrome c oxidoreductase (cytochrome b-c1 complex, complex III, CIII).

Its subcellular location is the mitochondrion inner membrane. The protein operates within energy metabolism; oxidative phosphorylation. In terms of biological role, component of the cytochrome c oxidase, the last enzyme in the mitochondrial electron transport chain which drives oxidative phosphorylation. The respiratory chain contains 3 multisubunit complexes succinate dehydrogenase (complex II, CII), ubiquinol-cytochrome c oxidoreductase (cytochrome b-c1 complex, complex III, CIII) and cytochrome c oxidase (complex IV, CIV), that cooperate to transfer electrons derived from NADH and succinate to molecular oxygen, creating an electrochemical gradient over the inner membrane that drives transmembrane transport and the ATP synthase. Cytochrome c oxidase is the component of the respiratory chain that catalyzes the reduction of oxygen to water. Electrons originating from reduced cytochrome c in the intermembrane space (IMS) are transferred via the dinuclear copper A center (CU(A)) of subunit 2 and heme A of subunit 1 to the active site in subunit 1, a binuclear center (BNC) formed by heme A3 and copper B (CU(B)). The BNC reduces molecular oxygen to 2 water molecules using 4 electrons from cytochrome c in the IMS and 4 protons from the mitochondrial matrix. This is Cytochrome c oxidase subunit 12, mitochondrial (cox12) from Schizosaccharomyces pombe (strain 972 / ATCC 24843) (Fission yeast).